The sequence spans 437 residues: Methylenetetrahydrofolate--tRNA-(uracil-5-)-methyltransferase TrmFO (437 aa).

10–15 (GAGLAG) is an FAD binding site.

It belongs to the MnmG family. TrmFO subfamily. It depends on FAD as a cofactor.

Its subcellular location is the cytoplasm. The enzyme catalyses uridine(54) in tRNA + (6R)-5,10-methylene-5,6,7,8-tetrahydrofolate + NADH + H(+) = 5-methyluridine(54) in tRNA + (6S)-5,6,7,8-tetrahydrofolate + NAD(+). It catalyses the reaction uridine(54) in tRNA + (6R)-5,10-methylene-5,6,7,8-tetrahydrofolate + NADPH + H(+) = 5-methyluridine(54) in tRNA + (6S)-5,6,7,8-tetrahydrofolate + NADP(+). In terms of biological role, catalyzes the folate-dependent formation of 5-methyl-uridine at position 54 (M-5-U54) in all tRNAs. The polypeptide is Methylenetetrahydrofolate--tRNA-(uracil-5-)-methyltransferase TrmFO (Lysinibacillus sphaericus (strain C3-41)).